The primary structure comprises 197 residues: Large ribosomal subunit protein bL17 (197 aa).

Residues 120–197 (DVPPADTGQG…EEEESEEDNT (78 aa)) form a disordered region. A compositionally biased stretch (gly residues) spans 127–136 (GQGGSGGTRR). Positions 159–197 (SSDEESESVEEDEATAEEASADAEQGEAEEEEESEEDNT) are enriched in acidic residues.

Belongs to the bacterial ribosomal protein bL17 family. In terms of assembly, part of the 50S ribosomal subunit. Contacts protein L32.

This chain is Large ribosomal subunit protein bL17, found in Salinibacter ruber (strain DSM 13855 / M31).